The chain runs to 390 residues: NADH-dependent butanol dehydrogenase B (390 aa).

This sequence belongs to the iron-containing alcohol dehydrogenase family. Homodimer.

The protein operates within alcohol metabolism; butanol biosynthesis. The sequence is that of NADH-dependent butanol dehydrogenase B (bdhB) from Clostridium acetobutylicum (strain ATCC 824 / DSM 792 / JCM 1419 / IAM 19013 / LMG 5710 / NBRC 13948 / NRRL B-527 / VKM B-1787 / 2291 / W).